Here is a 388-residue protein sequence, read N- to C-terminus: MKFVDEAVIRVEAGDGGSGCVSFRREKYVPDGGPDGGDGGDGGSVYLQADENFNTLIEFRFERFHMAERGENGRGRDCTGHSGKDLILKVPVGTRAIDHDTEEVLGDLTTHGQKLLVAKGGFHGLGNTRFKSSTNRAPRQKTLGTPGEVRSLKLELLLLADVGLLGMPNAGKSTFIRAVSRATPKVADYPFTTLVPNLGVVNPRPGQSFVIADIPGLIEGAAEGAGLGIRFLKHLERCRILLHIIDIEPIDGTDPVESARAIVGELEKYSPKLASKPRWLVFNKTDLLLEEELQEKVERIVKELEWEGDVYTISAYNREGTKELALKLLDYIASLPPEDNVVNPDDEVEFKWDNYHQANLDSVNEDYDDDFDDDFDDDDYDVEVIYQR.

Residues 1-159 (MKFVDEAVIR…RSLKLELLLL (159 aa)) enclose the Obg domain. Positions 160–333 (ADVGLLGMPN…LALKLLDYIA (174 aa)) constitute an OBG-type G domain. Residues 166-173 (GMPNAGKS), 191-195 (FTTLV), 213-216 (DIPG), 283-286 (NKTD), and 314-316 (SAY) contribute to the GTP site. Mg(2+)-binding residues include S173 and T193.

The protein belongs to the TRAFAC class OBG-HflX-like GTPase superfamily. OBG GTPase family. Monomer. Requires Mg(2+) as cofactor.

The protein localises to the cytoplasm. In terms of biological role, an essential GTPase which binds GTP, GDP and possibly (p)ppGpp with moderate affinity, with high nucleotide exchange rates and a fairly low GTP hydrolysis rate. Plays a role in control of the cell cycle, stress response, ribosome biogenesis and in those bacteria that undergo differentiation, in morphogenesis control. The protein is GTPase Obg of Shewanella putrefaciens (strain CN-32 / ATCC BAA-453).